The following is a 146-amino-acid chain: Snaclec coagulation factor X-activating enzyme light chain 1 (146 aa).

A signal peptide spans 1-23 (MGRFISVSFGCLVVFLSLSGTEA). C27 and C38 form a disulfide bridge. In terms of domain architecture, C-type lectin spans 34–145 (YEQHCYKGFN…CNFIAPVVCK (112 aa)). N-linked (GlcNAc...) (complex) asparagine glycosylation occurs at N47. Cystine bridges form between C55–C144 and C121–C136.

This sequence belongs to the snaclec family. Heterotrimer; disulfide-linked. The heterotrimer consists of 1 heavy chain (a metalloproteinase) and 2 light chains: LC1 and LC2. Post-translationally, N-glycosylated; probably required for conformation. Removal of easily accessible sugars does not change its functional capacity, but removal of the core sugars with N-glycanase causes a virtually complete loss of enzyme activity, apparently as a result of major conformational changes in the molecule. Not O-glycosylated. As to expression, expressed by the venom gland.

It is found in the secreted. Functionally, regulatory subunit of the blood coagulation factor X- and IX-activating enzyme. The enzyme activates coagulation factor X (F10) by cleaving the Arg-Ile bond and is also able to activate coagulation factor IX (F9) and protein S (PROS1) by specific cleavage of Arg-Ile and Arg-Val bonds. May serve as an exosite by which the enzyme recognizes and binds to the Gla domain of factor X (F10) and factor IX (F9) in a calcium-dependent manner. The protein is Snaclec coagulation factor X-activating enzyme light chain 1 (LC1) of Daboia siamensis (Eastern Russel's viper).